Consider the following 118-residue polypeptide: Large ribosomal subunit protein bL20 (118 aa).

It belongs to the bacterial ribosomal protein bL20 family.

In terms of biological role, binds directly to 23S ribosomal RNA and is necessary for the in vitro assembly process of the 50S ribosomal subunit. It is not involved in the protein synthesizing functions of that subunit. This is Large ribosomal subunit protein bL20 from Thermotoga neapolitana (strain ATCC 49049 / DSM 4359 / NBRC 107923 / NS-E).